Reading from the N-terminus, the 311-residue chain is Metal-staphylopine import system permease protein CntB (311 aa).

The next 6 helical transmembrane spans lie at 9-29 (IALM…LTYI), 105-125 (LTII…VVSA), 139-159 (VAFF…IIYV), 173-193 (GPES…GIYF), 237-257 (IFCM…YIFA), and 274-294 (FPVI…FNTL). In terms of domain architecture, ABC transmembrane type-1 spans 99–295 (FMNTLKLTII…VLFIVFNTLA (197 aa)).

It belongs to the binding-protein-dependent transport system permease family. In terms of assembly, the complex is composed of two ATP-binding proteins (CntD and CntF), two transmembrane proteins (CntB and CntC) and a solute-binding protein (CntA).

Its subcellular location is the cell membrane. Its activity is regulated as follows. Nickel/cobalt import is reduced in the presence of zinc. Its function is as follows. Part of the ABC transporter complex CntABCDF (Opp1) involved in the uptake of metal in complex with the metallophore staphylopine (StP). Involved in the import of divalent metals ions such as nickel, cobalt and zinc. Probably responsible for the translocation of the substrate across the membrane. Plays a major role in nickel/cobalt import in zinc-depleted conditions. Contributes to virulence. Required for full urease activity in vitro. The sequence is that of Metal-staphylopine import system permease protein CntB from Staphylococcus aureus (strain NCTC 8325 / PS 47).